Consider the following 1251-residue polypeptide: Insulin receptor substrate 1 (1251 aa).

Position 3 is a phosphoserine (Ser3). The mediates interaction with PHIP stretch occupies residues 3–137 (SPPESDGFSD…GAGGGGGSCS (135 aa)). Positions 12 to 115 (DVRKVGYLRK…WYQALLQLHN (104 aa)) constitute a PH domain. Position 99 is a phosphoserine; by CK2 (Ser99). Positions 160-264 (FKEVWQVILK…EAMRAMSDEF (105 aa)) constitute an IRS-type PTB domain. Residues 262–430 (DEFRPRSKSQ…SDGGFISSDE (169 aa)) form a disordered region. Residues 269–281 (KSQSSSNCSNPIS) are compositionally biased toward low complexity. Ser270 bears the Phosphoserine mark. Position 307 is a phosphoserine; by RPS6KB1 (Ser307). A Phosphoserine; by IKKB, MAPK8 and RPS6KB1 modification is found at Ser312. Phosphoserine is present on residues Ser323, Ser330, Ser345, and Ser348. The segment covering 354-363 (THAHRHRGSA) has biased composition (basic residues). Low complexity-rich tracts occupy residues 383–404 (SPSATSPVSLSSSSTSGHGSTS) and 412–424 (SSASVSGSPSDGG). Position 419 is a phosphoserine (Ser419). Residues Thr446 and Thr453 each carry the phosphothreonine modification. Tyr465 bears the Phosphotyrosine; by INSR mark. A YXXM motif 1 motif is present at residues 465–468 (YICM). The tract at residues 494–513 (YTPGTGLGTSPALAGDEASS) is disordered. Residue Ser527 is modified to Phosphoserine; by RPS6KB1. A YXXM motif 2 motif is present at residues 551-554 (YTEM). Positions 594-610 (RRGGHHRPDSSTLHTDD) are enriched in basic and acidic residues. Positions 594-616 (RRGGHHRPDSSTLHTDDGYMPMS) are disordered. Tyr612 carries the post-translational modification Phosphotyrosine; by INSR. The YXXM motif 3 motif lies at 612 to 615 (YMPM). The residue at position 629 (Ser629) is a Phosphoserine. Phosphotyrosine; by INSR is present on Tyr632. Positions 632–635 (YMPM) match the YXXM motif 4 motif. The residue at position 636 (Ser636) is a Phosphoserine; by RPS6KB1. At Tyr662 the chain carries Phosphotyrosine. Residues 662-665 (YMMM) carry the YXXM motif 5 motif. A disordered region spans residues 668-692 (SGGCSPDIGGGPSSSSSSTVPSGSS). Residues 730–733 (YMNM) carry the YXXM motif 6 motif. Disordered regions lie at residues 734 to 753 (SPVGDSNTSSPSDCYYGPED) and 769 to 946 (FKHT…EETG). Over residues 774 to 783 (RPGEPEEGAR) the composition is skewed to basic and acidic residues. Ser792 carries the phosphoserine; by AMPK and SIK2 modification. Low complexity-rich tracts occupy residues 799–813 (AATADDSSSSTSSDS) and 875–891 (QQQQQQQQQQQQQQQQQ). The residue at position 901 (Ser901) is a Phosphoserine. Tyr905 carries the post-translational modification Phosphotyrosine; by INSR. Residues 905 to 907 (YVN) are GRB2-binding. A compositionally biased stretch (polar residues) spans 924–937 (SRSSPSVRCPSQLQ). A phosphotyrosine; by INSR mark is found at Tyr950 and Tyr998. Short sequence motifs (YXXM motif) lie at residues 950-953 (YMKM), 998-1001 (YMTM), and 1021-1024 (YADM). Disordered stretches follow at residues 1091-1124 (NQSAKVIRADPQGCRRRHSSETFSSTPSATRVGN) and 1130-1149 (AGAAIGGSGGSSSSSEDVKR). Phosphoserine is present on residues Ser1109 and Ser1110. A compositionally biased stretch (polar residues) spans 1111–1123 (ETFSSTPSATRVG). Position 1188 is a phosphotyrosine; by INSR (Tyr1188). A Glycyl lysine isopeptide (Lys-Gly) (interchain with G-Cter in ubiquitin) cross-link involves residue Lys1195. The interval 1195–1251 (KDFKQRPQECTPQPQPPPPPPPHQPLGSSESSSTRRSSEDLSAYASISFQKQPEDLQ) is disordered. Residues 1207-1218 (QPQPPPPPPPHQ) show a composition bias toward pro residues. A Phosphotyrosine; by INSR modification is found at Tyr1238.

Interacts with UBTF and PIK3CA. Interacts (via phosphorylated YXXM motifs) with PIK3R1. Interacts with ROCK1 and FER. Interacts (via PH domain) with PHIP. Interacts with GRB2. Interacts with SOCS7. Interacts (via IRS-type PTB domain) with IGF1R and INSR (via the tyrosine-phosphorylated NPXY motif). Interacts with ALK. Interacts with EIF2AK2/PKR. Interacts with GKAP1. Interacts with DGKZ in the absence of insulin; insulin stimulation decreases this interaction. Found in a ternary complex with DGKZ and PIP5K1A in the absence of insulin stimulation. Interacts with SQSTM1; the interaction is disrupted by the presence of tensin TNS2. Interacts with NCK1 (via SH2 domain). Interacts with NCK2 (via SH3 domain). Interacts with SH2B1; this interaction enhances leptin-induced activation of the PI3-kinase pathway. Interacts with DVL2; this interaction promotes the Wnt/beta-catenin signaling pathway. Interacts with JAK1. In terms of processing, serine phosphorylation of IRS1 is a mechanism for insulin resistance. Ser-312 phosphorylation inhibits insulin action through disruption of IRS1 interaction with the insulin receptor. Phosphorylation of Tyr-905 is required for GRB2-binding. Phosphorylated by ALK. Phosphorylated at Ser-270, Ser-307, Ser-636 and Ser-1109 by RPS6KB1; phosphorylation induces accelerated degradation of IRS1. Phosphorylated on tyrosine residues in response to insulin. In skeletal muscles, dephosphorylated on Tyr-612 by TNS2 under anabolic conditions; dephosphorylation results in the proteasomal degradation of IRS1. Post-translationally, ubiquitinated by the Cul7-RING(FBXW8) complex in a mTOR-dependent manner, leading to its degradation: the Cul7-RING(FBXW8) complex recognizes and binds IRS1 previously phosphorylated by S6 kinase (RPS6KB1 or RPS6KB2). Ubiquitinated by TRAF4 through 'Lys-29' linkage; this ubiquitination regulates the interaction of IRS1 with IGFR and IRS1 tyrosine phosphorylation upon IGF1 stimulation. S-nitrosylation at by BLVRB inhibits its activity.

The protein localises to the cytoplasm. It is found in the nucleus. Functionally, signaling adapter protein that participates in the signal transduction from two prominent receptor tyrosine kinases, insulin receptor/INSR and insulin-like growth factor I receptor/IGF1R. Plays therefore an important role in development, growth, glucose homeostasis as well as lipid metabolism. Upon phosphorylation by the insulin receptor, functions as a signaling scaffold that propagates insulin action through binding to SH2 domain-containing proteins including the p85 regulatory subunit of PI3K, NCK1, NCK2, GRB2 or SHP2. Recruitment of GRB2 leads to the activation of the guanine nucleotide exchange factor SOS1 which in turn triggers the Ras/Raf/MEK/MAPK signaling cascade. Activation of the PI3K/AKT pathway is responsible for most of insulin metabolic effects in the cell, and the Ras/Raf/MEK/MAPK is involved in the regulation of gene expression and in cooperation with the PI3K pathway regulates cell growth and differentiation. Acts a positive regulator of the Wnt/beta-catenin signaling pathway through suppression of DVL2 autophagy-mediated degradation leading to cell proliferation. The sequence is that of Insulin receptor substrate 1 (IRS1) from Chlorocebus aethiops (Green monkey).